The sequence spans 850 residues: Bifunctional levopimaradiene synthase, chloroplastic (850 aa).

The transit peptide at 1–52 (MALPSSSLSSQIHTGATTQCIPHFHGSLNAGTSAGKRRSLYLRWGKGPSKIV) directs the protein to the chloroplast. A substrate-binding site is contributed by Lys-250. Mg(2+)-binding residues include Asp-383 and Asp-385. The short motif at 383 to 386 (DIDD) is the DXDD motif element. Lys-470 lines the substrate pocket. Residues Asp-602, Asp-606, Asn-746, Thr-750, and Glu-754 each coordinate Mg(2+). A DDXXD motif motif is present at residues 602 to 606 (DDLYD).

It belongs to the terpene synthase family. Tpsd subfamily. It depends on Mg(2+) as a cofactor. Expressed in young tissues such as flushing buds and green bark tissues. Lower levels in mature needles and bark.

It is found in the plastid. The protein resides in the chloroplast. It catalyses the reaction (2E,6E,10E)-geranylgeranyl diphosphate = (+)-copalyl diphosphate. The catalysed reaction is (+)-copalyl diphosphate = abieta-8(14),12-diene + diphosphate. The enzyme catalyses (+)-copalyl diphosphate = neoabietadiene + diphosphate. It functions in the pathway terpene metabolism; oleoresin biosynthesis. Its function is as follows. Involved in defensive oleoresin formation in conifers in response to insect attack or other injury. Involved in diterpene (C20) olefins biosynthesis. Bifunctional enzyme that catalyzes two sequential cyclizations of geranylgeranyl diphosphate (GGPP) to levopimaradiene. Levopimaradiene is the major products of the enzyme followed by abietadiene, neoabietadiene and palustradiene. No activity with geranyl diphosphate (GPP) or farnesyl diphosphate (FPP) as substrate. In Pinus taeda (Loblolly pine), this protein is Bifunctional levopimaradiene synthase, chloroplastic (LPS).